Reading from the N-terminus, the 603-residue chain is Protein regulator of cytokinesis 1 (603 aa).

The interval 1 to 341 (MRRSEVLADE…HLHDAEIVRL (341 aa)) is dimerization. Coiled-coil stretches lie at residues 34-65 (EQRL…RERL), 96-136 (ILQL…DILC), 211-246 (SLEN…IREL), 272-304 (RNAL…LAQF), and 383-463 (GNLL…AEML). Residues 342 to 466 (RNYYDVHKEL…QTEAEMLYGS (125 aa)) are spectrin-fold. Residues 447-459 (KQERQLKNKKQTE) are compositionally biased toward basic and acidic residues. The tract at residues 447–502 (KQERQLKNKKQTEAEMLYGSTPRTPSKRPGQTPKKSGKMNTTTMSSATPNSSIRPV) is disordered. The tract at residues 467 to 603 (TPRTPSKRPG…RILNSTNIQS (137 aa)) is unstructured, Arg/Lys rich. The residue at position 470 (Thr-470) is a Phosphothreonine; by CDK1. Positions 484-499 (KMNTTTMSSATPNSSI) are enriched in polar residues. Phosphoserine occurs at positions 510 and 568. Thr-575 carries the phosphothreonine modification. The disordered stretch occupies residues 583-603 (LSKASRSDATSRILNSTNIQS). Polar residues predominate over residues 589–603 (SDATSRILNSTNIQS). Position 599 is a phosphothreonine; by PLK1 (Thr-599).

This sequence belongs to the MAP65/ASE1 family. In terms of assembly, homodimer. Interacts with the C-terminal Rho-GAP domain and the basic region of RACGAP1. The interaction with RACGAP1 inhibits its GAP activity towards CDC42 in vitro, which may be required for maintaining normal spindle morphology. Interacts (via N-terminus) with the C-terminus of CENPE (via C-terminus); the interaction occurs during late mitosis. Interacts (via N-terminus) with KIF4A (via C-terminus); the interaction is required for the progression of mitosis. Interacts (via N-terminus) with KIF23 (via C-terminus); the interaction occurs during late mitosis. Interacts with KIF14 and KIF20A. Interacts with PLK1. Interacts with KIF20B. Interacts with CCDC66. Post-translationally, phosphorylation by CDK1 in early mitosis holds PRC1 in an inactive monomeric state, during the metaphase to anaphase transition, PRC1 is dephosphorylated, promoting interaction with KIF4A, which then translocates PRC1 along mitotic spindles to the plus ends of antiparallel interdigitating microtubules. Dephosphorylation also promotes MT-bundling activity by allowing dimerization. Phosphorylation by CDK1 prevents PLK1-binding: upon degradation of CDK1 at anaphase and dephosphorylation, it is then phosphorylated by PLK1, leading to cytokinesis.

The protein localises to the nucleus. It localises to the cytoplasm. The protein resides in the cytoskeleton. Its subcellular location is the spindle pole. It is found in the midbody. In terms of biological role, key regulator of cytokinesis that cross-links antiparrallel microtubules at an average distance of 35 nM. Essential for controlling the spatiotemporal formation of the midzone and successful cytokinesis. Required for KIF14 localization to the central spindle and midbody. Required to recruit PLK1 to the spindle. Stimulates PLK1 phosphorylation of RACGAP1 to allow recruitment of ECT2 to the central spindle. Acts as an oncogene for promoting bladder cancer cells proliferation, apoptosis inhibition and carcinogenic progression. The polypeptide is Protein regulator of cytokinesis 1 (Mus musculus (Mouse)).